The primary structure comprises 197 residues: Ribonuclease HII (197 aa).

One can recognise an RNase H type-2 domain in the interval 7–197 (LGIAGVDEVG…SFLRKLFATV (191 aa)). The a divalent metal cation site is built by D13, E14, and D109.

It belongs to the RNase HII family. It depends on Mn(2+) as a cofactor. Mg(2+) is required as a cofactor.

It localises to the cytoplasm. The catalysed reaction is Endonucleolytic cleavage to 5'-phosphomonoester.. Functionally, endonuclease that specifically degrades the RNA of RNA-DNA hybrids. This is Ribonuclease HII from Synechococcus sp. (strain CC9311).